Reading from the N-terminus, the 353-residue chain is Photosystem II protein D1 (353 aa).

Position 2 is an N-acetylthreonine (T2). Phosphothreonine is present on T2. A run of 3 helical transmembrane segments spans residues 29–46 (YIGW…TATS), 118–133 (HFLL…EWEL), and 142–156 (WIAV…AATA). H118 lines the chlorophyll a pocket. A pheophytin a-binding site is contributed by Y126. Residues D170 and E189 each contribute to the [CaMn4O5] cluster site. The chain crosses the membrane as a helical span at residues 197–218 (FHMLGVAGVFGGSLFSAMHGSL). H198 is a binding site for chlorophyll a. Residues H215 and 264 to 265 (SF) contribute to the a quinone site. Residue H215 coordinates Fe cation. Fe cation is bound at residue H272. Residues 274–288 (FLAAWPVVGIWFTAL) form a helical membrane-spanning segment. The [CaMn4O5] cluster site is built by H332, E333, D342, and A344. A propeptide spanning residues 345-353 (AIEAPSTNG) is cleaved from the precursor.

It belongs to the reaction center PufL/M/PsbA/D family. In terms of assembly, PSII is composed of 1 copy each of membrane proteins PsbA, PsbB, PsbC, PsbD, PsbE, PsbF, PsbH, PsbI, PsbJ, PsbK, PsbL, PsbM, PsbT, PsbX, PsbY, PsbZ, Psb30/Ycf12, at least 3 peripheral proteins of the oxygen-evolving complex and a large number of cofactors. It forms dimeric complexes. The D1/D2 heterodimer binds P680, chlorophylls that are the primary electron donor of PSII, and subsequent electron acceptors. It shares a non-heme iron and each subunit binds pheophytin, quinone, additional chlorophylls, carotenoids and lipids. D1 provides most of the ligands for the Mn4-Ca-O5 cluster of the oxygen-evolving complex (OEC). There is also a Cl(-1) ion associated with D1 and D2, which is required for oxygen evolution. The PSII complex binds additional chlorophylls, carotenoids and specific lipids. serves as cofactor. In terms of processing, tyr-161 forms a radical intermediate that is referred to as redox-active TyrZ, YZ or Y-Z. Post-translationally, C-terminally processed by CTPA; processing is essential to allow assembly of the oxygen-evolving complex and thus photosynthetic growth.

The protein resides in the plastid. The protein localises to the chloroplast thylakoid membrane. The enzyme catalyses 2 a plastoquinone + 4 hnu + 2 H2O = 2 a plastoquinol + O2. Its function is as follows. Photosystem II (PSII) is a light-driven water:plastoquinone oxidoreductase that uses light energy to abstract electrons from H(2)O, generating O(2) and a proton gradient subsequently used for ATP formation. It consists of a core antenna complex that captures photons, and an electron transfer chain that converts photonic excitation into a charge separation. The D1/D2 (PsbA/PsbD) reaction center heterodimer binds P680, the primary electron donor of PSII as well as several subsequent electron acceptors. The protein is Photosystem II protein D1 of Nicotiana debneyi (Debney's tobacco).